Here is a 567-residue protein sequence, read N- to C-terminus: Septation ring formation regulator EzrA (567 aa).

Topologically, residues 1–2 (MG) are extracellular. A helical membrane pass occupies residues 3–21 (MAWIVLLLGAGAIIYNHVY). Residues 22–567 (RKRMYREIDR…LWQEDNSREQ (546 aa)) are Cytoplasmic-facing. Coiled coils occupy residues 98 to 159 (YRQA…AYRY) and 251 to 497 (HMER…IEQA).

Belongs to the EzrA family.

It is found in the cell membrane. Its function is as follows. Negative regulator of FtsZ ring formation; modulates the frequency and position of FtsZ ring formation. Inhibits FtsZ ring formation at polar sites. Interacts either with FtsZ or with one of its binding partners to promote depolymerization. This is Septation ring formation regulator EzrA from Geobacillus kaustophilus (strain HTA426).